The chain runs to 904 residues: Endoplasmic reticulum metallopeptidase 1 (904 aa).

An N-acetylmethionine modification is found at Met-1. Topologically, residues 1–63 are cytoplasmic; it reads MEWGSESAAV…PGGSGGASRG (63 aa). Residues 1–65 form a disordered region; that stretch reads MEWGSESAAV…GSGGASRGAG (65 aa). Residues 55 to 65 are compositionally biased toward gly residues; it reads GGSGGASRGAG. Residues 64-84 traverse the membrane as a helical segment; the sequence is AGTGLSEVRAALGLALYLIAL. Over 85–399 the chain is Lumenal; it reads RTLVQLSLQQ…AASKYRHGNM (315 aa). The N-linked (GlcNAc...) asparagine glycan is linked to Asn-182. Cys-204 and Cys-222 are joined by a disulfide. Zn(2+) contacts are provided by His-205 and Asp-217. Residue Glu-251 is the Proton acceptor of the active site. Residues Glu-252, Glu-278, and His-354 each contribute to the Zn(2+) site. The chain crosses the membrane as a helical span at residues 400–420; the sequence is VFFDVLGLFVIAYPSRIGSII. Over 421-457 the chain is Cytoplasmic; the sequence is NYMVVMGVVLYLGKKFLQPKHKTGNYKKDFLCGLGIT. A helical transmembrane segment spans residues 458 to 478; it reads LISWFTSLVTVLIIAVFISLI. Topologically, residues 479–489 are lumenal; it reads GQSLSWYNHFY. The helical transmembrane segment at 490–510 threads the bilayer; that stretch reads VSVCLYGTATVAKIILIHTLA. Residues 511-519 are Cytoplasmic-facing; it reads KRFYYMNAS. Residues 520 to 540 form a helical membrane-spanning segment; the sequence is AQYLGEVFFDISLFVHCCFLV. Thr-541 is a topological domain (lumenal). Residues 542–562 traverse the membrane as a helical segment; the sequence is LTYQGLCSAFISAVWVAFPLL. The Cytoplasmic portion of the chain corresponds to 563-579; that stretch reads TKLCVHKDFKQHGAQGK. The helical transmembrane segment at 580-600 threads the bilayer; it reads FIAFYLLGMFIPYLYALYLIW. Residues 601-621 lie on the Lumenal side of the membrane; that stretch reads AVFEMFTPILGRSGSEIPPDV. The helical transmembrane segment at 622 to 642 threads the bilayer; sequence VLASILAGCTMILSSYFINFI. Over 643-651 the chain is Cytoplasmic; it reads YLAKSTKKT. The chain crosses the membrane as a helical span at residues 652–672; sequence MLTLTLVCAITFLLVCSGTFF. The Lumenal segment spans residues 673-904; the sequence is PYSSNPANPK…WVCTYDLFVF (232 aa). N-linked (GlcNAc...) asparagine glycosylation occurs at Asn-730.

Belongs to the peptidase M28 family. The cofactor is Zn(2+).

It is found in the endoplasmic reticulum membrane. In terms of biological role, within the ovary, required for the organization of somatic cells and oocytes into discrete follicular structures. This is Endoplasmic reticulum metallopeptidase 1 from Homo sapiens (Human).